Reading from the N-terminus, the 374-residue chain is Protein dip1 (374 aa).

Belongs to the LDB17 family.

Its subcellular location is the cytoplasm. The protein localises to the nucleus. It localises to the cell tip. May be involved in protein-linked oligosaccharide phosphorylation. The polypeptide is Protein dip1 (dip1) (Schizosaccharomyces pombe (strain 972 / ATCC 24843) (Fission yeast)).